A 369-amino-acid chain; its full sequence is Xylene/toluene monooxygenase hydroxylase component XylM (369 aa).

Transmembrane regions (helical) follow at residues 8-28, 60-80, and 91-111; these read LIPV…YWVW, LTQY…VFGV, and LQVA…TLPV. Residues His113, His117, His143, His147, and His148 each contribute to the Fe cation site. The helical transmembrane segment at 207 to 227 threads the bilayer; it reads VALLLALPGLVSYLGGPALGL. Fe cation contacts are provided by His282, His285, and His286. The helical transmembrane segment at 305–325 threads the bilayer; it reads MPSLFVCFLLGLIPPLWFALI.

This sequence belongs to the fatty acid desaturase type 1 family. AlkB subfamily. The xylene/toluene monooxygenase is composed of two subunits: the electron transfer component XylA and the hydroxylase component XylM. It depends on Fe(2+) as a cofactor.

It is found in the cell inner membrane. It carries out the reaction m-xylene + 2 reduced [2Fe-2S]-[ferredoxin] + O2 + 2 H(+) = 3-methylbenzyl alcohol + 2 oxidized [2Fe-2S]-[ferredoxin] + H2O. The enzyme catalyses p-xylene + 2 reduced [2Fe-2S]-[ferredoxin] + O2 + 2 H(+) = 4-methylbenzyl alcohol + 2 oxidized [2Fe-2S]-[ferredoxin] + H2O. The catalysed reaction is toluene + 2 reduced [2Fe-2S]-[ferredoxin] + O2 + 2 H(+) = benzyl alcohol + 2 oxidized [2Fe-2S]-[ferredoxin] + H2O. Functionally, component of a monooxygenase that catalyzes the first step in the degradation of xylenes and toluenes. XylM catalyzes the hydroxylation of the methyl side chain of xylenes and toluenes. The electrons are provided by the electron transfer component XylA. The best substrates are m-xylene and p-xylene, followed by toluene. Shows weak activity with o-xylene. In vitro, is also active with substituted compounds, such as chlorotoluenes. Cannot use benzyl alcohol. The sequence is that of Xylene/toluene monooxygenase hydroxylase component XylM from Pseudomonas putida (Arthrobacter siderocapsulatus).